The sequence spans 221 residues: Glutathione S-transferase 1 (221 aa).

A GST N-terminal domain is found at 7–88; sequence QKMQLYSFSL…YLEEKFPENP (82 aa). Residues 17–22, valine 60, 72–73, glutamine 112, and 116–118 contribute to the glutathione site; these read SSCAWR, DS, and NLA. Residues 93-221 enclose the GST C-terminal domain; the sequence is DLQKRALNYQ…ISPMLDEAKS (129 aa).

This sequence belongs to the GST superfamily. Zeta family.

It carries out the reaction RX + glutathione = an S-substituted glutathione + a halide anion + H(+). Conjugation of reduced glutathione to a wide number of exogenous and endogenous hydrophobic electrophiles. This Dianthus caryophyllus (Carnation) protein is Glutathione S-transferase 1 (GST1).